The following is a 518-amino-acid chain: Probable bifunctional methylthioribulose-1-phosphate dehydratase/enolase-phosphatase E1 (518 aa).

The methylthioribulose-1-phosphate dehydratase stretch occupies residues 1-247 (MAAAPPAVAV…AIKLHQIGLD (247 aa)). Residue cysteine 119 participates in substrate binding. Zn(2+) contacts are provided by histidine 137 and histidine 139. Glutamate 162 functions as the Proton donor/acceptor; for methylthioribulose-1-phosphate dehydratase activity in the catalytic mechanism. Histidine 212 lines the Zn(2+) pocket. An enolase-phosphatase E1 region spans residues 279–518 (IVLDIEGTTT…FKTITSFAEI (240 aa)). Residues aspartate 282 and glutamate 284 each contribute to the Mg(2+) site. Substrate is bound by residues 417–418 (SS) and lysine 451. Position 477 (aspartate 477) interacts with Mg(2+).

This sequence in the N-terminal section; belongs to the aldolase class II family. MtnB subfamily. In the C-terminal section; belongs to the HAD-like hydrolase superfamily. MasA/MtnC family. Requires Zn(2+) as cofactor. The cofactor is Mg(2+).

It carries out the reaction 5-(methylsulfanyl)-D-ribulose 1-phosphate = 5-methylsulfanyl-2,3-dioxopentyl phosphate + H2O. It catalyses the reaction 5-methylsulfanyl-2,3-dioxopentyl phosphate + H2O = 1,2-dihydroxy-5-(methylsulfanyl)pent-1-en-3-one + phosphate. The protein operates within amino-acid biosynthesis; L-methionine biosynthesis via salvage pathway; L-methionine from S-methyl-5-thio-alpha-D-ribose 1-phosphate: step 2/6. It participates in amino-acid biosynthesis; L-methionine biosynthesis via salvage pathway; L-methionine from S-methyl-5-thio-alpha-D-ribose 1-phosphate: step 3/6. Its pathway is amino-acid biosynthesis; L-methionine biosynthesis via salvage pathway; L-methionine from S-methyl-5-thio-alpha-D-ribose 1-phosphate: step 4/6. The sequence is that of Probable bifunctional methylthioribulose-1-phosphate dehydratase/enolase-phosphatase E1 from Populus trichocarpa (Western balsam poplar).